We begin with the raw amino-acid sequence, 245 residues long: UDP-N-acetyl-D-mannosaminuronic acid transferase (245 aa).

This sequence belongs to the glycosyltransferase 26 family.

It catalyses the reaction UDP-N-acetyl-alpha-D-mannosaminouronate + N-acetyl-alpha-D-glucosaminyl-di-trans,octa-cis-undecaprenyl diphosphate = beta-D-ManNAcA-(1-&gt;4)-alpha-D-GlcNAc-di-trans,octa-cis-undecaprenyl diphosphate + UDP + H(+). It functions in the pathway bacterial outer membrane biogenesis; enterobacterial common antigen biosynthesis. Its function is as follows. Catalyzes the synthesis of Und-PP-GlcNAc-ManNAcA (Lipid II), the second lipid-linked intermediate involved in enterobacterial common antigen (ECA) synthesis. The protein is UDP-N-acetyl-D-mannosaminuronic acid transferase of Photorhabdus laumondii subsp. laumondii (strain DSM 15139 / CIP 105565 / TT01) (Photorhabdus luminescens subsp. laumondii).